Reading from the N-terminus, the 499-residue chain is Cysteine--tRNA ligase (499 aa).

C29 contacts Zn(2+). The 'HIGH' region signature appears at 31 to 41 (VTVYDLCHLGH). 3 residues coordinate Zn(2+): C213, H238, and E242. Positions 270-274 (KMSKS) match the 'KMSKS' region motif. K273 serves as a coordination point for ATP.

The protein belongs to the class-I aminoacyl-tRNA synthetase family. As to quaternary structure, monomer. Requires Zn(2+) as cofactor.

Its subcellular location is the cytoplasm. It carries out the reaction tRNA(Cys) + L-cysteine + ATP = L-cysteinyl-tRNA(Cys) + AMP + diphosphate. This Synechococcus sp. (strain CC9902) protein is Cysteine--tRNA ligase.